The sequence spans 180 residues: Amnesiac neuropeptides (180 aa).

The signal sequence occupies residues 1-32 (MRSFCCCFYPAAVALHCVLLFYTFFLLFRASA). Propeptides lie at residues 33–35 (LRR) and 152–180 (GRRS…GEMR). The interval 155 to 180 (SVPRGQPKFSRENPRALSPSLLGEMR) is disordered.

As to expression, enriched expression in the embryonic and larval nervous systems. Strongly expressed in two large neurons that project over all the lobes of the mushroom bodies.

Its subcellular location is the secreted. Required for associative learning and memory in adults. Expression pattern suggests a modulatory role in memory formation. Controls neurotransmitter-mediated signaling pathways associated with the structure of the larval peripheral nerve. The chain is Amnesiac neuropeptides (amn) from Drosophila melanogaster (Fruit fly).